The chain runs to 348 residues: Dihydroorotase (348 aa).

Zn(2+)-binding residues include His17 and His19. Substrate-binding positions include 19–21 and Asn45; that span reads HLR. Residues Lys103, His140, and His178 each coordinate Zn(2+). Lys103 carries the N6-carboxylysine modification. A substrate-binding site is contributed by His140. Leu223 provides a ligand contact to substrate. Asp251 lines the Zn(2+) pocket. Asp251 is an active-site residue. Positions 255 and 267 each coordinate substrate.

Belongs to the metallo-dependent hydrolases superfamily. DHOase family. Class II DHOase subfamily. In terms of assembly, homodimer. It depends on Zn(2+) as a cofactor.

It catalyses the reaction (S)-dihydroorotate + H2O = N-carbamoyl-L-aspartate + H(+). It functions in the pathway pyrimidine metabolism; UMP biosynthesis via de novo pathway; (S)-dihydroorotate from bicarbonate: step 3/3. Functionally, catalyzes the reversible cyclization of carbamoyl aspartate to dihydroorotate. The polypeptide is Dihydroorotase (Klebsiella pneumoniae (strain 342)).